A 501-amino-acid chain; its full sequence is Solute carrier family 2, facilitated glucose transporter member 5 (501 aa).

At Met1 the chain carries N-acetylmethionine. Residues 1–17 (MEEKHQEETGELTLVLA) are Cytoplasmic-facing. A helical transmembrane segment spans residues 18–38 (LATLIAAFGSSFQYGYNVAAV). A D-fructose-binding site is contributed by Tyr31. At 39–67 (NSPSEFMQQFYNDTYYDRNEENIESFTLT) the chain is on the extracellular side. The N-linked (GlcNAc...) asparagine glycan is linked to Asn50. A helical transmembrane segment spans residues 68 to 90 (LLWSLTVSMFPFGGFIGSLMVGT). Topologically, residues 91-97 (LVNKLGR) are cytoplasmic. Residues 98-118 (KGALLFNNIFSILPAILMGCS) traverse the membrane as a helical segment. At 119–125 (QIAQSFE) the chain is on the extracellular side. The chain crosses the membrane as a helical span at residues 126–148 (LIIISRLLVGICAGISSNVVPMY). The Cytoplasmic segment spans residues 149–160 (LGELAPKNLRGA). A helical transmembrane segment spans residues 161–181 (LGVVPQLFITVGILVAQLFGL). Gln166 is a binding site for D-fructose. Topologically, residues 182–191 (RSLLANEDGW) are extracellular. A helical transmembrane segment spans residues 192 to 212 (PVLLGLTGVPAGLQLLLLPFF). Residues 213–276 (PESPRYLLIQ…LFTMQSLRWQ (64 aa)) are Cytoplasmic-facing. Residues 277–297 (LISMIVLMAGQQLSGVNAIYY) form a helical membrane-spanning segment. D-fructose-binding positions include Gln287 and 295–297 (IYY). Residues 298 to 312 (YADQIYLSAGVKSDD) lie on the Extracellular side of the membrane. Residues 313–333 (VQYVTAGTGAVNVFMTILTIF) form a helical membrane-spanning segment. At 334 to 341 (VVELWGRR) the chain is on the cytoplasmic side. The helical transmembrane segment at 342–362 (FLLLVGFSTCLIACLVLTAAL) threads the bilayer. Residues 363 to 370 (ALQNTISW) are Extracellular-facing. The helical transmembrane segment at 371 to 393 (MPYISIVCVIVYVIGHALGPSPI) threads the bilayer. D-fructose is bound at residue His386. At 394–411 (PALLITEIFLQSSRPAAY) the chain is on the cytoplasmic side. The helical transmembrane segment at 412-432 (MIGGSVHWLSNFTVGLIFPFI) threads the bilayer. 418 to 419 (HW) provides a ligand contact to D-fructose. At 433–438 (QMGLGP) the chain is on the extracellular side. The helical transmembrane segment at 439–459 (YSFIIFATICFLTTIYIFMVV) threads the bilayer. At 460 to 501 (PETKGRTFIEINQIFTMKNKVSDVYPKKEEELGALPHAILEQ) the chain is on the cytoplasmic side.

It belongs to the major facilitator superfamily. Sugar transporter (TC 2.A.1.1) family. Glucose transporter subfamily. Detected at the apical membrane of villi in the jejunum. Detected in jejunum mucosa. Detected in epididymis and whole testis (at protein level). Detected in small intestine, kidney and testis. Detected in cochlea, but not in inner or outer cochlear hair cells.

The protein resides in the apical cell membrane. Its subcellular location is the cell membrane. It localises to the sarcolemma. The enzyme catalyses D-fructose(out) = D-fructose(in). Its activity is regulated as follows. Fructose uptake is inhibited by cytochalasin B. Functionally, functions as a fructose transporter that has only low activity with other monosaccharides. Can mediate the uptake of deoxyglucose, but with low efficiency. Essential for fructose uptake in the small intestine. Plays a role in the regulation of salt uptake and blood pressure in response to dietary fructose. Required for the development of high blood pressure in response to high dietary fructose intake. In Mus musculus (Mouse), this protein is Solute carrier family 2, facilitated glucose transporter member 5.